Reading from the N-terminus, the 20-residue chain is GPNGKSQSIIVGPWGDRVTN.

The interval 1–20 is disordered; that stretch reads GPNGKSQSIIVGPWGDRVTN.

Belongs to the jacalin lectin family. As to quaternary structure, formed of four alpha chains and four beta chains.

D-galactose-specific lectin, binds the T-antigen structure Gal-beta1,3-GalNAc. The chain is Agglutinin beta-3 chain from Maclura pomifera (Osage orange).